The primary structure comprises 375 residues: Deoxyhypusine synthase-like protein (375 aa).

The protein belongs to the deoxyhypusine synthase family.

The sequence is that of Deoxyhypusine synthase-like protein from Elusimicrobium minutum (strain Pei191).